The primary structure comprises 840 residues: Cancer-associated gene 1 protein homolog (840 aa).

Positions 303–559 (MALNEILKKL…HVARSEEQNY (257 aa)) form a coiled coil. Residues 800–840 (EDLIRKPREKARKPRSKSLENHPKSMTMMPAVFKENRNDLD) form a disordered region. Basic residues predominate over residues 806–815 (PREKARKPRS).

This is Cancer-associated gene 1 protein homolog (CAGE1) from Macaca fascicularis (Crab-eating macaque).